A 292-amino-acid chain; its full sequence is Undecaprenyl-diphosphatase (292 aa).

The next 7 membrane-spanning stretches (helical) occupy residues 1-21 (MSLVSAALFGLVQALTEFLPV), 46-66 (FVTIIQAGTTLAVLIYFRADI), 88-108 (ARLGWYILLGTLPAALAGKLL), 114-134 (ALGNWVIAGSLVGLGLVLLAA), 192-212 (FLLSVPITLAAGAYKLWSTVP), 225-245 (VVGTVVSAVAGYLVIDWLLAW), and 253-273 (VFVVWRIAAGAAIAALILSGV).

This sequence belongs to the UppP family.

It localises to the cell inner membrane. The enzyme catalyses di-trans,octa-cis-undecaprenyl diphosphate + H2O = di-trans,octa-cis-undecaprenyl phosphate + phosphate + H(+). In terms of biological role, catalyzes the dephosphorylation of undecaprenyl diphosphate (UPP). Confers resistance to bacitracin. In Anaeromyxobacter dehalogenans (strain 2CP-C), this protein is Undecaprenyl-diphosphatase.